We begin with the raw amino-acid sequence, 339 residues long: Phenylalanine--tRNA ligase alpha subunit (339 aa).

Residue Glu-254 participates in Mg(2+) binding.

Belongs to the class-II aminoacyl-tRNA synthetase family. Phe-tRNA synthetase alpha subunit type 1 subfamily. As to quaternary structure, tetramer of two alpha and two beta subunits. Mg(2+) is required as a cofactor.

It is found in the cytoplasm. It carries out the reaction tRNA(Phe) + L-phenylalanine + ATP = L-phenylalanyl-tRNA(Phe) + AMP + diphosphate + H(+). This Clostridium botulinum (strain Alaska E43 / Type E3) protein is Phenylalanine--tRNA ligase alpha subunit.